Here is a 267-residue protein sequence, read N- to C-terminus: Tryptophan synthase alpha chain (267 aa).

Catalysis depends on proton acceptor residues Glu49 and Asp60.

The protein belongs to the TrpA family. As to quaternary structure, tetramer of two alpha and two beta chains.

The enzyme catalyses (1S,2R)-1-C-(indol-3-yl)glycerol 3-phosphate + L-serine = D-glyceraldehyde 3-phosphate + L-tryptophan + H2O. The protein operates within amino-acid biosynthesis; L-tryptophan biosynthesis; L-tryptophan from chorismate: step 5/5. In terms of biological role, the alpha subunit is responsible for the aldol cleavage of indoleglycerol phosphate to indole and glyceraldehyde 3-phosphate. The chain is Tryptophan synthase alpha chain from Methylococcus capsulatus (strain ATCC 33009 / NCIMB 11132 / Bath).